Consider the following 300-residue polypeptide: PTB domain-containing engulfment adapter protein 1 (300 aa).

The region spanning A21 to L176 is the PID domain. Positions V160 to V199 form a coiled coil.

Belongs to the ced-6 family.

The protein resides in the cytoplasm. Its function is as follows. May function as an adapter protein. Required for efficient phagocytosis of apoptotic cells. May play a role in the internalization and endosomal trafficking of various lrp1 ligands. In Danio rerio (Zebrafish), this protein is PTB domain-containing engulfment adapter protein 1 (gulp1).